The primary structure comprises 268 residues: 4-diphosphocytidyl-2-C-methyl-D-erythritol kinase (268 aa).

Lys10 is a catalytic residue. 101 to 111 (PTQAGLGGGST) provides a ligand contact to ATP. Asp143 is an active-site residue.

This sequence belongs to the GHMP kinase family. IspE subfamily.

It catalyses the reaction 4-CDP-2-C-methyl-D-erythritol + ATP = 4-CDP-2-C-methyl-D-erythritol 2-phosphate + ADP + H(+). It participates in isoprenoid biosynthesis; isopentenyl diphosphate biosynthesis via DXP pathway; isopentenyl diphosphate from 1-deoxy-D-xylulose 5-phosphate: step 3/6. Functionally, catalyzes the phosphorylation of the position 2 hydroxy group of 4-diphosphocytidyl-2C-methyl-D-erythritol. The polypeptide is 4-diphosphocytidyl-2-C-methyl-D-erythritol kinase (Helicobacter acinonychis (strain Sheeba)).